The following is a 440-amino-acid chain: Phosphoglucosamine mutase (440 aa).

Catalysis depends on Ser-97, which acts as the Phosphoserine intermediate. Mg(2+)-binding residues include Ser-97, Asp-237, Asp-239, and Asp-241. Ser-97 is subject to Phosphoserine.

The protein belongs to the phosphohexose mutase family. It depends on Mg(2+) as a cofactor. Post-translationally, activated by phosphorylation.

It carries out the reaction alpha-D-glucosamine 1-phosphate = D-glucosamine 6-phosphate. Its function is as follows. Catalyzes the conversion of glucosamine-6-phosphate to glucosamine-1-phosphate. The chain is Phosphoglucosamine mutase from Nautilia profundicola (strain ATCC BAA-1463 / DSM 18972 / AmH).